The chain runs to 344 residues: NDP-polyphosphate phosphotransferase 2 (344 aa).

The segment at 1 to 60 (METAKPIAPQKDSKANGVDATDPVVKVASPQDPAGDAKVEDATAPVAEVEPRTPRNRRLP) is disordered.

This sequence belongs to the polyphosphate kinase 2 (PPK2) family. Class I subfamily. The cofactor is Mg(2+).

The catalysed reaction is [phosphate](n) + ATP = [phosphate](n+1) + ADP. It catalyses the reaction [phosphate](n) + CTP = [phosphate](n+1) + CDP. It carries out the reaction [phosphate](n) + GTP = [phosphate](n+1) + GDP. The enzyme catalyses [phosphate](n) + UTP = [phosphate](n+1) + UDP. Uses inorganic polyphosphate (polyP) as a donor to convert NDP to NTP. PolyP hydrolysis is slightly faster with ADP, but it can also use GDP, CDP and UDP. This Ruegeria pomeroyi (strain ATCC 700808 / DSM 15171 / DSS-3) (Silicibacter pomeroyi) protein is NDP-polyphosphate phosphotransferase 2.